A 471-amino-acid polypeptide reads, in one-letter code: Glutamate--tRNA ligase (471 aa).

Positions 9–19 (PSPTGYLHVGG) match the 'HIGH' region motif. Positions 98, 100, 125, and 127 each coordinate Zn(2+). The short motif at 237-241 (KLSKR) is the 'KMSKS' region element. Lysine 240 is an ATP binding site.

The protein belongs to the class-I aminoacyl-tRNA synthetase family. Glutamate--tRNA ligase type 1 subfamily. As to quaternary structure, monomer. Zn(2+) serves as cofactor.

It is found in the cytoplasm. The enzyme catalyses tRNA(Glu) + L-glutamate + ATP = L-glutamyl-tRNA(Glu) + AMP + diphosphate. Its function is as follows. Catalyzes the attachment of glutamate to tRNA(Glu) in a two-step reaction: glutamate is first activated by ATP to form Glu-AMP and then transferred to the acceptor end of tRNA(Glu). The protein is Glutamate--tRNA ligase of Escherichia coli O1:K1 / APEC.